A 204-amino-acid chain; its full sequence is 3,4-dihydroxy-2-butanone 4-phosphate synthase (204 aa).

Glu27 contacts Mg(2+). Asp31 contributes to the D-ribulose 5-phosphate binding site. An S-glutathionyl cysteine modification is found at Cys56. Residues Thr82 and 140–144 each bind D-ribulose 5-phosphate; that span reads RDGHT. Position 143 (His143) interacts with Mg(2+).

Belongs to the DHBP synthase family. As to quaternary structure, homodimer. Requires Mg(2+) as cofactor. It depends on Mn(2+) as a cofactor. Post-translationally, S-glutathionylation is reversible and dependent on a glutaredoxin.

It catalyses the reaction D-ribulose 5-phosphate = (2S)-2-hydroxy-3-oxobutyl phosphate + formate + H(+). It functions in the pathway cofactor biosynthesis; riboflavin biosynthesis; 2-hydroxy-3-oxobutyl phosphate from D-ribulose 5-phosphate: step 1/1. In terms of biological role, catalyzes the conversion of D-ribulose 5-phosphate to formate and 3,4-dihydroxy-2-butanone 4-phosphate. In Schizosaccharomyces pombe (strain 972 / ATCC 24843) (Fission yeast), this protein is 3,4-dihydroxy-2-butanone 4-phosphate synthase.